The following is an 890-amino-acid chain: MTQYTPMIQQYLKVKADYQDAFLFFRLGDFYEMFFEDAVKAAHELEITLTSRDGGSSERIPMCGVPHHAAKNYIEQLVEKGYKVAVCEQVEDPKTAKGVVRREVVQLITPGTMMEGRTIDEKENNFLAALTHFEDGSYALACNDLTTGQNTVTLLTGSVEDILLEVYATGSKEIVVDSTFSKDELNKLTETLKMTISYEDTTTIPEGLEHLVKSVSQAKLIKAIGRLFNYVIRTQKRSLDHLQPVEIYYTNQFMKIDVHSKRNLELTETLRTKEKTGSLLWLLDKTKTAMGGRMLKQWMERPLIQKEKVEERLEMVETFVNDYFLREDLKEKLKEVYDLERLAGKVAFGNVNARDLLQLRRSLLQVPAILEAISLLDNAYAARLIQGADPCESLTELLGRSIQENPPLSIKDGDIIKDGYNDKLDQYRYVSKNGKTWIAELEKRERDITGVKSLKIGYNRIFGYYIEVTKANLGALPEGRYERKQTLANAERFITDELKEKETLILEAEEKIVQLEYDLFTALREEVKVFIPKLQHLAKVISELDVLQSFATVSEEEQFVKPVLTNKREIFIKDGRHPVVEKVLNGKLYVPNDCIMPEKMDVFLITGPNMSGKSTYMRQLALVTVMSQIGCFVPATEAVLPVFDQIFTRIGAADDLISGQSTFMVEMLEAKNAIANASERSLILFDEIGRGTSTYDGMALAQAIIEHIHDQIGAKTLFSTHYHELTVLEESLDQLKNVHVSAIEENGKVVFLHKIQDGAADKSYGIHVAQLAELPESLIARAKEVLAQLEGQEEIVIPKRVEVKVPEVAPEPVVVKEEPAEIQETKVETEEESQLSFFGGEQSSKKQDKSVLDAKETAVLAQIKKIDLLDMTPLEAMNELYRLQKKLKKG.

607–614 (GPNMSGKS) contributes to the ATP binding site.

Belongs to the DNA mismatch repair MutS family.

This protein is involved in the repair of mismatches in DNA. It is possible that it carries out the mismatch recognition step. This protein has a weak ATPase activity. In Bacillus mycoides (strain KBAB4) (Bacillus weihenstephanensis), this protein is DNA mismatch repair protein MutS.